We begin with the raw amino-acid sequence, 636 residues long: MTTDSYPKKYDIVIVGAGPVGILLSLCMSRWGYKVKHIDNRPVPTATGRADGIQPRSTEILRNLGLKRKIMAYDPAKVYDVSFWDPRPDGSGIMRTGNWPSCPRFIDTRYPFTTLVHQGKIETVFLDEIKKAGTTVERPWTIIGFKNDGLDATYPVQVQLKCLDTNVVETVRAKYLFSGEGARSFVREQLGIQIRHKDPISYVWGVMDGVVRTDFPDIQTKCTIHSDAGSIMVIPREDDMVRLYVQIASSSDPDFNPRKTATAEEVQNVAKKILKPYYIEWDRVEWYSVYPIGQGISEKYTLDERVFMGGDACHTHSPKAGQGMNTAFHDALNMAWKLHAVESGLAQRSILSTYETERKNIAETLLDFDNKYAALFSKRRPNAGEVGEAATAETGRSAEEDPFVKTFKDSCEFTSGYGVAYLPNIFNWDPSHPAKSPLFDVPGINLVTGKAFTPSTVTRLADSNFVHLEQEIPANGAFRIFIFAGRQSRSKKAIADFAANLEKERSFLSAYRRSDIGEISFFERHNPHSKLFTLCLIYAEKKNDIDMDSIPQILRDYRYHIYSDDIPDVRVPNATYAAHEKLGFDPEKGGVVVTRPDSHIACTVQLAEGSGTVDALNAYFGSFSTKPLGQEQASRL.

FAD is bound by residues 11–40, 242–244, Tyr-290, and Asp-311; these read DIVI…HIDN and RLY. A helical transmembrane segment spans residues 12 to 33; sequence IVIVGAGPVGILLSLCMSRWGY. N-linked (GlcNAc...) asparagine glycosylation is present at Asn-573.

It belongs to the PheA/TfdB FAD monooxygenase family. It depends on FAD as a cofactor.

It localises to the membrane. It catalyses the reaction 4-hydroxybenzoate + NADH + O2 + H(+) = 3,4-dihydroxybenzoate + NAD(+) + H2O. The catalysed reaction is 4-hydroxybenzoate + NADPH + O2 + H(+) = 3,4-dihydroxybenzoate + NADP(+) + H2O. Functionally, FAD-dependent monooxygenase; part of the benzoic acid degradation pathway also known as the protocatechuic acid pathway. Benzoic acid debradation begins with the conversion of benzoic acid into 4-hydroxybenzoic acid through hydroxylation by the benzoate-4-monooxygenase bphA, and its partner NADPH-cytochrome P450 reductase cprA which act as a mediator in electron donation from NADPH. 4-Hydroxybenzoic acid is then converted into 3,4-dihydroxybenzoic acid (also called protocatechuic acid) by the p-hydroxybenzoate-m-hydroxylase phhA. Protocatechuic acid is converted into 3-carboxy-cis,cis-muconic acid by the intradiol ring-cleavage dioxygenase prcA, which is further metabolized through the 3-oxoadipate pathway to finally enter the tricarboxylic acid cycle (TCA). The protein is p-hydroxybenzoate-m-hydroxylase of Emericella nidulans (strain FGSC A4 / ATCC 38163 / CBS 112.46 / NRRL 194 / M139) (Aspergillus nidulans).